The primary structure comprises 314 residues: DNA-directed RNA polymerase subunit alpha (314 aa).

The interval 1–227 is alpha N-terminal domain (alpha-NTD); it reads MTYFQIECVE…SLFYPLTNLN (227 aa). The alpha C-terminal domain (alpha-CTD) stretch occupies residues 239 to 314; sequence EEEINQVLIE…LPKEKNIQNT (76 aa).

Belongs to the RNA polymerase alpha chain family. In terms of assembly, in plastids the minimal PEP RNA polymerase catalytic core is composed of four subunits: alpha, beta, beta', and beta''. When a (nuclear-encoded) sigma factor is associated with the core the holoenzyme is formed, which can initiate transcription.

It localises to the plastid. The protein resides in the chloroplast. The catalysed reaction is RNA(n) + a ribonucleoside 5'-triphosphate = RNA(n+1) + diphosphate. Its function is as follows. DNA-dependent RNA polymerase catalyzes the transcription of DNA into RNA using the four ribonucleoside triphosphates as substrates. In Gracilaria tenuistipitata var. liui (Red alga), this protein is DNA-directed RNA polymerase subunit alpha.